Reading from the N-terminus, the 290-residue chain is MNSKSGYNRLFDPMAETGQALDFSQHGLGQKTVGNPFSAKAKMSVRNLNVYYDDKQAIHDVSLDINRNEVMAMIGPSGCGKSTFLRCLNRMNDTIENCSVNGEVTLDEQDIYHKKQDVVPLRARVGIVFQKPNPFPKSIYENVAYGPKVHGLVSRRAQLDEIVEDSLRKASLWDEVKDRLFSPGTGLSGGQQQRLCIARTIAVSPEVILMDEPCSALDPIATARIEELMAELSQNFTIAIVTHSMQQAARVSSRTAYFHMGRLIEVNDTRRVFTNPEHELTEAYITGRFG.

An ABC transporter domain is found at 43–285; it reads MSVRNLNVYY…PEHELTEAYI (243 aa). Position 75–82 (75–82) interacts with ATP; it reads GPSGCGKS.

It belongs to the ABC transporter superfamily. Phosphate importer (TC 3.A.1.7) family. As to quaternary structure, the complex is composed of two ATP-binding proteins (PstB), two transmembrane proteins (PstC and PstA) and a solute-binding protein (PstS).

The protein localises to the cell inner membrane. It catalyses the reaction phosphate(out) + ATP + H2O = ADP + 2 phosphate(in) + H(+). Functionally, part of the ABC transporter complex PstSACB involved in phosphate import. Responsible for energy coupling to the transport system. In Pseudoalteromonas atlantica (strain T6c / ATCC BAA-1087), this protein is Phosphate import ATP-binding protein PstB.